We begin with the raw amino-acid sequence, 393 residues long: Acetate kinase (393 aa).

A Mg(2+)-binding site is contributed by Asn6. Position 13 (Lys13) interacts with ATP. Arg87 lines the substrate pocket. The active-site Proton donor/acceptor is Asp143. ATP contacts are provided by residues 203 to 207 (HLGNG), 278 to 280 (DMR), and 326 to 330 (GIGEN). Residue Glu380 coordinates Mg(2+).

Belongs to the acetokinase family. Homodimer. Mg(2+) serves as cofactor. Requires Mn(2+) as cofactor.

The protein localises to the cytoplasm. It carries out the reaction acetate + ATP = acetyl phosphate + ADP. It functions in the pathway metabolic intermediate biosynthesis; acetyl-CoA biosynthesis; acetyl-CoA from acetate: step 1/2. Its function is as follows. Catalyzes the formation of acetyl phosphate from acetate and ATP. Can also catalyze the reverse reaction. The chain is Acetate kinase from Mycoplasma capricolum subsp. capricolum (strain California kid / ATCC 27343 / NCTC 10154).